A 163-amino-acid polypeptide reads, in one-letter code: Probable chemoreceptor glutamine deamidase CheD (163 aa).

The protein belongs to the CheD family.

It carries out the reaction L-glutaminyl-[protein] + H2O = L-glutamyl-[protein] + NH4(+). Its function is as follows. Probably deamidates glutamine residues to glutamate on methyl-accepting chemotaxis receptors (MCPs), playing an important role in chemotaxis. In Borrelia turicatae (strain 91E135), this protein is Probable chemoreceptor glutamine deamidase CheD.